Consider the following 154-residue polypeptide: 6,7-dimethyl-8-ribityllumazine synthase (154 aa).

5-amino-6-(D-ribitylamino)uracil-binding positions include Phe-22, 56 to 58 (AFE), and 80 to 82 (AVI). (2S)-2-hydroxy-3-oxobutyl phosphate is bound at residue 85-86 (ET). The Proton donor role is filled by His-88. Phe-113 contributes to the 5-amino-6-(D-ribitylamino)uracil binding site. Arg-127 is a binding site for (2S)-2-hydroxy-3-oxobutyl phosphate.

It belongs to the DMRL synthase family.

It carries out the reaction (2S)-2-hydroxy-3-oxobutyl phosphate + 5-amino-6-(D-ribitylamino)uracil = 6,7-dimethyl-8-(1-D-ribityl)lumazine + phosphate + 2 H2O + H(+). The protein operates within cofactor biosynthesis; riboflavin biosynthesis; riboflavin from 2-hydroxy-3-oxobutyl phosphate and 5-amino-6-(D-ribitylamino)uracil: step 1/2. Functionally, catalyzes the formation of 6,7-dimethyl-8-ribityllumazine by condensation of 5-amino-6-(D-ribitylamino)uracil with 3,4-dihydroxy-2-butanone 4-phosphate. This is the penultimate step in the biosynthesis of riboflavin. In Thermoanaerobacter sp. (strain X514), this protein is 6,7-dimethyl-8-ribityllumazine synthase.